The following is a 134-amino-acid chain: S-protein homolog 18 (134 aa).

The first 25 residues, 1-25, serve as a signal peptide directing secretion; the sequence is MCPSSFRLILSVILIAFLFVGLCEA. An N-linked (GlcNAc...) asparagine glycan is attached at Asn87.

It belongs to the plant self-incompatibility (S1) protein family.

The protein resides in the secreted. This chain is S-protein homolog 18, found in Arabidopsis thaliana (Mouse-ear cress).